We begin with the raw amino-acid sequence, 165 residues long: uncharacterized protein (165 aa).

Residues 20 to 40 form a helical membrane-spanning segment; it reads INLIASIVLWLLFVITVIGTF. An N-linked (GlcNAc...) asparagine; by host glycan is attached at asparagine 51. A helical membrane pass occupies residues 97–117; that stretch reads VGIIVILIFMLMIIMNGFYQM.

The protein resides in the membrane. This is an uncharacterized protein from Acanthamoeba polyphaga (Amoeba).